The following is a 572-amino-acid chain: Capsid vertex component 2 (572 aa).

Positions 1 to 58 are interaction with major capsid protein/MCP; it reads MFRPRFEPMNLPKDSNKPSTLMVLADRLNFISCAEGSSKYASKLFEGTLIDAEIMTNR.

It belongs to the herpesviridae CVC2 protein family. Heterodimerizes with CVC1. Interacts with major capsid protein/MCP and triplex capsid protein 1/TRX1 at the pentamer vertices. Interacts with the large tegument protein/LTP.

It localises to the virion. The protein localises to the host nucleus. Functionally, capsid vertex-specific component that plays a role during viral DNA encapsidation, assuring correct genome cleavage and presumably stabilizing capsids that contain full-length viral genomes. Participates in the interaction between the capsid and the tegument through interaction with the large tegument protein/LTP. In Infectious laryngotracheitis virus (strain Thorne V882) (ILTV), this protein is Capsid vertex component 2.